We begin with the raw amino-acid sequence, 2194 residues long: PDZ and LIM domain protein Zasp (2194 aa).

Residues 8–90 enclose the PDZ domain; the sequence is QIKLSRFDAQ…NFVITVQRGG (83 aa). Residues 211 to 277 form a disordered region; that stretch reads TGQSTPAFGN…KPPSTGGLPT (67 aa). The span at 228-253 shows a compositional bias: low complexity; sequence PQQLQQPQQQYNQHQQHYHQQQQQQQ. One can recognise an LIM zinc-binding 1 domain in the interval 280–339; that stretch reads NICTECERLITGVFVRIKDKNLHVECFKCATCGTSLKNQGYYNFNNKLYCDIHAKQAAIN. The span at 415 to 435 shows a compositional bias: low complexity; the sequence is AATPQAATATDSPAATASSSD. 11 disordered regions span residues 415–436, 457–476, 511–558, 580–611, 623–692, 896–940, 1223–1260, 1297–1322, 1550–1632, 1646–1738, and 1815–1837; these read AATP…SSDN, VALA…DQPF, GAAA…AVEE, SRQS…YIPP, VQQV…TTSE, AAAA…PRGS, LTQK…QRTQ, QSQS…PPAN, LNAS…QQPE, QREQ…YGKT, and APPP…SGYQ. Residues 515-530 are compositionally biased toward low complexity; sequence PKSPVSYPPQQQQQSP. Polar residues-rich tracts occupy residues 580–590 and 644–667; these read SRQSQRGSSFT and VGTS…TASA. A compositionally biased stretch (low complexity) spans 676-692; the sequence is SSDSYTSTSTTTTTTSE. Polar residues predominate over residues 1598 to 1610; the sequence is QTGSITTGQSYQG. Composition is skewed to low complexity over residues 1616–1630, 1646–1668, and 1699–1727; these read SEQS…YNQQ, QREQ…TRSQ, and SQSV…QNQS. LIM zinc-binding domains lie at 2018–2078, 2079–2138, and 2139–2194; these read PLCN…KYLA, PTCS…LFTT, and KCFA…NHAR.

As to quaternary structure, interacts with alpha-actinin (Actn). In terms of tissue distribution, expression is first detected in the proctodeum and the midgut primordium. In stage 11 embryos, expression is predominant in the leading edge of epidermal cells adjacent to the amnioserosa. Stage 12 embryos exhibit expression in the midgut and the leading edge. Expressed in several rows of germ band cells next to the leading edge at stage 14. Strong expression is visible in the midgut and pharyngeal muscles of stage 17 embryos. Also expressed in somatic muscles and visceral mesoderm. Colocalizes with mys (beta PS integrin) in myotendinous junctions and with Actn in muscle Z lines.

It localises to the cytoplasm. The protein resides in the cytoskeleton. Functionally, regulator of cell matrix adhesion having two related functions, one upstream of Actn organizing the Z line and the other downstream of integrins regulating assembly of integrin adhesion sites. Also required for the formation of myotendinous junctions in muscles. The protein is PDZ and LIM domain protein Zasp (Zasp52) of Drosophila melanogaster (Fruit fly).